Reading from the N-terminus, the 283-residue chain is Elongation factor Ts (283 aa).

Positions 80-83 (TDFV) are involved in Mg(2+) ion dislocation from EF-Tu.

This sequence belongs to the EF-Ts family.

Its subcellular location is the cytoplasm. Associates with the EF-Tu.GDP complex and induces the exchange of GDP to GTP. It remains bound to the aminoacyl-tRNA.EF-Tu.GTP complex up to the GTP hydrolysis stage on the ribosome. This chain is Elongation factor Ts, found in Haemophilus ducreyi (strain 35000HP / ATCC 700724).